A 161-amino-acid polypeptide reads, in one-letter code: Abscisic acid receptor PYL11 (161 aa).

Residues 3–154 (TSQKYHTCGS…NLKSLAKLSE (152 aa)) are START-like. Residues Lys-39, 68–73 (AEFSRE), 95–101 (RLVNYRS), and Glu-119 each bind abscisate. The short motif at 64-68 (SGLPA) is the Gate loop element. The Latch loop signature appears at 94 to 96 (HRL).

It belongs to the PYR/PYL/RCAR abscisic acid intracellular receptor family. Homodimer. Binds ABA on one subunit only. Interacts with PP2Cs. Binds to CARs protein in an ABA-independent manner, both at the plasma membrane and in the nucleus. Interacts with I-2 and TOPP1.

The protein resides in the cytoplasm. The protein localises to the nucleus. Its subcellular location is the cell membrane. Its function is as follows. Receptor for abscisic acid (ABA) required for ABA-mediated responses such as stomatal closure and germination inhibition. Inhibits the activity of group-A protein phosphatases type 2C (PP2Cs) when activated by ABA. Suppresses the phosphatase activity of TOPP1 in a dose-dependent manner in vitro. This is Abscisic acid receptor PYL11 (PYL11) from Arabidopsis thaliana (Mouse-ear cress).